The primary structure comprises 166 residues: 6,7-dimethyl-8-ribityllumazine synthase (166 aa).

5-amino-6-(D-ribitylamino)uracil contacts are provided by residues phenylalanine 22, 56 to 58, and 80 to 82; these read SME and AVI. 85-86 is a (2S)-2-hydroxy-3-oxobutyl phosphate binding site; sequence ET. Histidine 88 functions as the Proton donor in the catalytic mechanism. Phenylalanine 113 lines the 5-amino-6-(D-ribitylamino)uracil pocket. Arginine 127 is a binding site for (2S)-2-hydroxy-3-oxobutyl phosphate.

The protein belongs to the DMRL synthase family.

It catalyses the reaction (2S)-2-hydroxy-3-oxobutyl phosphate + 5-amino-6-(D-ribitylamino)uracil = 6,7-dimethyl-8-(1-D-ribityl)lumazine + phosphate + 2 H2O + H(+). It functions in the pathway cofactor biosynthesis; riboflavin biosynthesis; riboflavin from 2-hydroxy-3-oxobutyl phosphate and 5-amino-6-(D-ribitylamino)uracil: step 1/2. Functionally, catalyzes the formation of 6,7-dimethyl-8-ribityllumazine by condensation of 5-amino-6-(D-ribitylamino)uracil with 3,4-dihydroxy-2-butanone 4-phosphate. This is the penultimate step in the biosynthesis of riboflavin. This is 6,7-dimethyl-8-ribityllumazine synthase from Thermotoga neapolitana (strain ATCC 49049 / DSM 4359 / NBRC 107923 / NS-E).